Reading from the N-terminus, the 603-residue chain is Insulin-like growth factor-binding protein complex acid labile subunit (603 aa).

Residues 1-23 form the signal peptide; sequence MALRTGGPALVVLLAFWVALGPC. The LRRNT domain occupies 32 to 74; that stretch reads ASADAEGPQCPVACTCSHDDYTDELSVFCSSKNLTHLPDDIPV. Cystine bridges form between Cys-41–Cys-47 and Cys-45–Cys-60. 3 N-linked (GlcNAc...) asparagine glycosylation sites follow: Asn-64, Asn-85, and Asn-96. LRR repeat units lie at residues 75–96, 99–120, 123–144, 147–168, 171–192, 195–216, 219–240, 243–264, 267–288, 291–312, 315–336, 339–360, 363–384, 387–408, 411–432, 435–456, 459–480, 483–504, and 507–528; these read STRA…AFQN, SLDF…ALLG, NLYY…LFTH, SLAS…LFQG, HLWD…VFQG, NLHE…LFCG, ELRE…VFVH, RLQK…AFLG, ALRW…TFPG, GLHV…TFKD, FLEE…TFEG, QLEV…AFSG, NVAV…VFQG, KLHS…TFAG, GLRR…SLAG, ELLE…LFQG, HLEY…VLGP, RAFW…LFSS, and RVRY…PGLE. Asn-368 carries an N-linked (GlcNAc...) asparagine glycan. Asn-515 carries N-linked (GlcNAc...) asparagine glycosylation. In terms of domain architecture, LRRCT spans 535-603; the sequence is NPWDCSCPLK…DVSETHFVHC (69 aa). 3 disulfides stabilise this stretch: Cys-539–Cys-581, Cys-541–Cys-603, and Cys-565–Cys-570. Asn-578 and Asn-586 each carry an N-linked (GlcNAc...) asparagine glycan.

Forms a ternary complex with IGF1 and IGFBP3. As to expression, brain, kidney, lung, heart, spleen, muscle and liver.

It localises to the secreted. It is found in the extracellular space. Functionally, may have an important role in regulating the access of circulating IGFs to the tissues. The sequence is that of Insulin-like growth factor-binding protein complex acid labile subunit (Igfals) from Rattus norvegicus (Rat).